The chain runs to 273 residues: Large ribosomal subunit protein uL2 (273 aa).

Disordered regions lie at residues 34-54 (LEKKSKSGGRNNNGRITTRHI) and 223-273 (VAMN…RRRK).

It belongs to the universal ribosomal protein uL2 family. Part of the 50S ribosomal subunit. Forms a bridge to the 30S subunit in the 70S ribosome.

One of the primary rRNA binding proteins. Required for association of the 30S and 50S subunits to form the 70S ribosome, for tRNA binding and peptide bond formation. It has been suggested to have peptidyltransferase activity; this is somewhat controversial. Makes several contacts with the 16S rRNA in the 70S ribosome. This is Large ribosomal subunit protein uL2 from Azotobacter vinelandii (strain DJ / ATCC BAA-1303).